The primary structure comprises 599 residues: Zinc finger BED domain-containing protein 3 (599 aa).

Positions 70–104 (LNGGMGSPGNGPGTPLSRNNYAHHHQQHQNQQHVG) are disordered. Residues 72–81 (GGMGSPGNGP) show a composition bias toward gly residues. The segment at 123–176 (VKTAKVWRYFDELPTIEQAAECRICRKKIKATNSSTTGMIRHLRSCHVQEYQLV) adopts a BED-type zinc-finger fold. 4 residues coordinate Zn(2+): Cys144, Cys147, His164, and His169. Disordered regions lie at residues 208 to 283 (GIEN…QCQN) and 440 to 491 (ATSS…SSID). 2 stretches are compositionally biased toward low complexity: residues 223–246 (SQKS…SHFS) and 268–283 (SNSI…QCQN). The segment covering 440 to 455 (ATSSYEDVSVNESQMA) has biased composition (polar residues). Positions 460–483 (GDEEEEIMEEEVEEDENVEIEDDT) are enriched in acidic residues.

In terms of tissue distribution, expressed in neuronal cell bodies in the ventral cord and HSN neurons.

Its subcellular location is the nucleus. Its function is as follows. Probable transcription factor. Involved in vulval organogenesis. During vulval development, may play a role in the regulation of cell cycle regulators such as cul-1. Positively modulates expression of homeobox protein lin-39, perhaps by binding to regulatory regions of the lin-39 gene, acting in the vulval lineage. Plays a role in larval molting. The polypeptide is Zinc finger BED domain-containing protein 3 (Caenorhabditis elegans).